Here is a 352-residue protein sequence, read N- to C-terminus: Coproporphyrin III ferrochelatase (352 aa).

Residues Ser52 and Tyr121 each coordinate Fe-coproporphyrin III. Fe(2+)-binding residues include His178 and Glu267.

This sequence belongs to the ferrochelatase family.

The protein resides in the cytoplasm. It carries out the reaction Fe-coproporphyrin III + 2 H(+) = coproporphyrin III + Fe(2+). It participates in porphyrin-containing compound metabolism; protoheme biosynthesis. Involved in coproporphyrin-dependent heme b biosynthesis. Catalyzes the insertion of ferrous iron into coproporphyrin III to form Fe-coproporphyrin III. The protein is Coproporphyrin III ferrochelatase of Propionibacterium freudenreichii subsp. freudenreichii.